A 184-amino-acid polypeptide reads, in one-letter code: Interferon alpha-1 (184 aa).

Positions 1 to 23 are cleaved as a signal peptide; it reads MALPVSLLMALVVLSCHSICSLG. Disulfide bonds link cysteine 24/cysteine 122 and cysteine 52/cysteine 162.

Belongs to the alpha/beta interferon family. In terms of assembly, interacts with CR2.

The protein localises to the secreted. Produced by macrophages, IFN-alpha have antiviral activities. Interferon stimulates the production of two enzymes: a protein kinase and an oligoadenylate synthetase. In Equus caballus (Horse), this protein is Interferon alpha-1.